The chain runs to 682 residues: MSHYRRHSLEPSITSKFRDSLSFQRDDDVINKPDFRELDFGSPLRPRGSSSAAATPAASGSSSSSSGSASGKPAVTSQFARRSHSGELSGLSQTSPVKPGSVNRNLKPGHRRSASAGTPLIYSGLGFSPVNNNNNSSRGGGSGATSPNPGVLPTGNICPSGRILKTGMATRASVRPETLCTGTANYGHGNIIRTGGKVSHATKAAAEMSDSEEVKKAGNVMYRKGNYAEALALYDRAISLSPENPAYRSNRAAALAASGRLEEAVKECLEAVRCDPSYARAHQRLASLYLRLGEAENARRHLCVSGQCPDQADLQRLQTLEKHLRLCTEARKIGDWRTVISEIDAAIANGADSSPQLVACKAEAFLRLHQIKDSDLCISSIPRLDHHHTQPPEKLFGIVCDAYVLCVQAQVDMALGRFENAIVKVERAMTIDHSNSPEVVSVLNNVKNVAKARTRGNELFSSGRYSEASVAYGDGLKLDAFNSVLYCNRAACWFKLGMWEKSVDDCNQALRIQPSYTKALLRRAASYGKLGRWEDAVRDYEVLRKELPGDSEVAESLQRARNALSNKSEEPKYLGFNNEVEEVSTLDKFKTATSLPGISVFHFKSSSNRQSEAISPFVNTLCLRYPLVHFFKVDVEESLALAKAESIKKIPTFKIYKKGEKVKEMVCPSHQLLEDSVTHFLL.

Disordered stretches follow at residues 1 to 120 and 132 to 157; these read MSHY…GTPL and NNNN…TGNI. Residue Ser8 is modified to Phosphoserine. The segment covering 16 to 39 has biased composition (basic and acidic residues); that stretch reads KFRDSLSFQRDDDVINKPDFRELD. Phosphoserine is present on Ser42. Positions 48–71 are enriched in low complexity; the sequence is GSSSAAATPAASGSSSSSSGSASG. 7 TPR repeats span residues 211-244, 246-278, 280-312, 402-435, 449-482, 483-516, and 518-550; these read SEEV…SPEN, AYRS…DPSY, RAHQ…PDQA, AYVL…DHSN, VAKA…DAFN, SVLY…QPSY, and KALL…LPGD. The 88-residue stretch at 587-674 folds into the Thioredoxin domain; it reads DKFKTATSLP…MVCPSHQLLE (88 aa).

Widely expressed.

In terms of biological role, involved in osmotic and salt stress tolerance. May play a role in the control of meristematic cell size during osmotic stress. This Arabidopsis thaliana (Mouse-ear cress) protein is TPR repeat-containing thioredoxin TTL4 (TTL4).